We begin with the raw amino-acid sequence, 80 residues long: Exodeoxyribonuclease 7 small subunit (80 aa).

It belongs to the XseB family. Heterooligomer composed of large and small subunits.

Its subcellular location is the cytoplasm. It catalyses the reaction Exonucleolytic cleavage in either 5'- to 3'- or 3'- to 5'-direction to yield nucleoside 5'-phosphates.. In terms of biological role, bidirectionally degrades single-stranded DNA into large acid-insoluble oligonucleotides, which are then degraded further into small acid-soluble oligonucleotides. This chain is Exodeoxyribonuclease 7 small subunit, found in Shigella sonnei (strain Ss046).